Consider the following 456-residue polypeptide: Septin-10 (456 aa).

Residues 40-306 (QGFCFNILCV…ELYRRCKLQE (267 aa)) enclose the Septin-type G domain. A G1 motif region spans residues 50–57 (GETGIGKS). GTP-binding positions include 50-57 (GETGIGKS), Gly105, 186-194 (KADTISKSE), Gly240, and Arg255. The tract at residues 102-105 (NTVG) is G3 motif. The tract at residues 185–188 (AKAD) is G4 motif. Ser418 is modified (phosphoserine).

The protein belongs to the TRAFAC class TrmE-Era-EngA-EngB-Septin-like GTPase superfamily. Septin GTPase family. In terms of assembly, septins polymerize into heterooligomeric protein complexes that form filaments, and can associate with cellular membranes, actin filaments and microtubules. GTPase activity is required for filament formation. Interacts with ADGB. In terms of processing, proteolytically cleaved in vitro in a calmodulin-dependent manner.

The protein resides in the cytoplasm. Its subcellular location is the cytoskeleton. The protein localises to the cell projection. It localises to the cilium. It is found in the flagellum. Its function is as follows. Filament-forming cytoskeletal GTPase. May play a role in cytokinesis (Potential). This is Septin-10 from Rattus norvegicus (Rat).